The sequence spans 433 residues: Ornithine decarboxylase 1B, chloroplastic (433 aa).

N6-(pyridoxal phosphate)lysine is present on Lys-96. Pyridoxal 5'-phosphate is bound by residues Ser-228, Gly-266, and 299 to 302 (EPGR). Residue 342-343 (YD) coordinates substrate. The active-site Proton donor; shared with dimeric partner is the Cys-378. Asp-379 is a substrate binding site. Residue Tyr-407 coordinates pyridoxal 5'-phosphate.

Belongs to the Orn/Lys/Arg decarboxylase class-II family. Homodimer. Only the dimer is catalytically active, as the active sites are constructed of residues from both monomers. It depends on pyridoxal 5'-phosphate as a cofactor.

The protein localises to the plastid. Its subcellular location is the chloroplast. The catalysed reaction is L-ornithine + H(+) = putrescine + CO2. It participates in alkaloid biosynthesis; nicotine biosynthesis. Its pathway is amine and polyamine biosynthesis; putrescine biosynthesis via L-ornithine pathway; putrescine from L-ornithine: step 1/1. Involved in the biosynthesis of pyridine alkaloid natural products, leading mainly to the production of anabasine, anatabine, nicotine and nornicotine, effective deterrents against herbivores with antiparasitic and pesticide properties (neurotoxins); nornicotine serves as the precursor in the synthesis of the carcinogen compound N'-nitrosonornicotine (NNN). Catalyzes the first and rate-limiting step of polyamine biosynthesis that converts ornithine into putrescine, which is the precursor for the polyamines, spermidine and spermine. Polyamines are essential for cell proliferation and are implicated in cellular processes, ranging from DNA replication to apoptosis. This chain is Ornithine decarboxylase 1B, chloroplastic, found in Nicotiana tabacum (Common tobacco).